An 84-amino-acid polypeptide reads, in one-letter code: UPF0457 protein BCE33L2961 (84 aa).

The protein belongs to the UPF0457 family.

The chain is UPF0457 protein BCE33L2961 from Bacillus cereus (strain ZK / E33L).